We begin with the raw amino-acid sequence, 181 residues long: GMP synthase [glutamine-hydrolyzing] subunit A (181 aa).

In terms of domain architecture, Glutamine amidotransferase type-1 spans Lys2–Arg181. Cys72 functions as the Nucleophile in the catalytic mechanism. Catalysis depends on residues His159 and Glu161.

Heterodimer composed of a glutamine amidotransferase subunit (A) and a GMP-binding subunit (B).

It catalyses the reaction XMP + L-glutamine + ATP + H2O = GMP + L-glutamate + AMP + diphosphate + 2 H(+). The protein operates within purine metabolism; GMP biosynthesis; GMP from XMP (L-Gln route): step 1/1. Its function is as follows. Catalyzes the synthesis of GMP from XMP. The sequence is that of GMP synthase [glutamine-hydrolyzing] subunit A from Methanothrix thermoacetophila (strain DSM 6194 / JCM 14653 / NBRC 101360 / PT) (Methanosaeta thermophila).